The chain runs to 588 residues: Aspartate--tRNA ligase (588 aa).

Glu177 contributes to the L-aspartate binding site. The tract at residues 201 to 204 (QLFK) is aspartate. Arg223 provides a ligand contact to L-aspartate. ATP-binding positions include 223 to 225 (RDE) and Gln232. L-aspartate is bound at residue His451. Position 485 (Glu485) interacts with ATP. Arg492 contacts L-aspartate. 537 to 540 (GLDR) lines the ATP pocket.

The protein belongs to the class-II aminoacyl-tRNA synthetase family. Type 1 subfamily. As to quaternary structure, homodimer.

It is found in the cytoplasm. It carries out the reaction tRNA(Asp) + L-aspartate + ATP = L-aspartyl-tRNA(Asp) + AMP + diphosphate. In terms of biological role, catalyzes the attachment of L-aspartate to tRNA(Asp) in a two-step reaction: L-aspartate is first activated by ATP to form Asp-AMP and then transferred to the acceptor end of tRNA(Asp). This Staphylococcus aureus (strain NCTC 8325 / PS 47) protein is Aspartate--tRNA ligase.